Consider the following 103-residue polypeptide: Large ribosomal subunit protein bL21 (103 aa).

The protein belongs to the bacterial ribosomal protein bL21 family. Part of the 50S ribosomal subunit. Contacts protein L20.

In terms of biological role, this protein binds to 23S rRNA in the presence of protein L20. This Enterobacter sp. (strain 638) protein is Large ribosomal subunit protein bL21.